The chain runs to 280 residues: MKLAAMIKKMCPSDSELSIPAKNCYRMVILGSSKVGKTAIVSRFLTGRFEDAYTPTIEDFHRKFYSIRGEVYQLDILDTSGNHPFPAMRRLSILTGDVFILVFSLDNRDSFEEVQRLKQQILDTKSCLKNKTKENVDVPLVICGNKGDRDFYREVEQREIEQLVGDDPQRCAYFEISAKKNSSLDQMFRALFAMAKLPSEMSPDLHRKVSVQYCDVLHKKALRNKKLLRAGSGGGGDHGDAFGILAPFARRPSVHSDLMYIREKTSVGSQAKDKERCVIS.

The residue at position 11 (Cys-11) is an S-nitrosocysteine. A GTP-binding site is contributed by 31-38 (GSSKVGKT). The Effector region signature appears at 53–61 (YTPTIEDFH). GTP contacts are provided by residues 78 to 82 (DTSGN) and 145 to 148 (NKGD). Cys-277 is subject to Cysteine methyl ester. The S-farnesyl cysteine moiety is linked to residue Cys-277. Positions 278 to 280 (VIS) are cleaved as a propeptide — removed in mature form.

It belongs to the small GTPase superfamily. RasD family. In terms of assembly, component of a complex, at least composed of APBB1, RASD1/DEXRAS1 and APP. Interacts with APBB1/FE65. Forms a ternary complex with CAPON and NOS1. S-nitrosylation stimulates guanine-nucleotide exchange activity. As to expression, expressed in brain, heart, kidney and liver.

The protein localises to the cell membrane. It localises to the cytoplasm. The protein resides in the perinuclear region. Its subcellular location is the nucleus. Functionally, small GTPase. Negatively regulates the transcription regulation activity of the APBB1/FE65-APP complex via its interaction with APBB1/FE65. The chain is Dexamethasone-induced Ras-related protein 1 (Rasd1) from Mus musculus (Mouse).